The primary structure comprises 340 residues: Guanine nucleotide-binding protein G(I)/G(S)/G(T) subunit beta-3 (340 aa).

WD repeat units lie at residues 53 to 83 (GHLA…IVWD), 95 to 125 (LRSS…SIYS), 141 to 170 (AHTG…ALWD), 182 to 212 (GHTG…KLWD), 224 to 254 (GHES…RLFD), 268 to 298 (SIIC…NIWD), and 310 to 340 (GHDN…KVWN).

Belongs to the WD repeat G protein beta family. In terms of assembly, g proteins are composed of 3 units, alpha, beta and gamma. Interacts with RASD2.

It localises to the cytoplasm. The protein resides in the perinuclear region. Guanine nucleotide-binding proteins (G proteins) are involved as a modulator or transducer in various transmembrane signaling systems. The beta and gamma chains are required for the GTPase activity, for replacement of GDP by GTP, and for G protein-effector interaction. The polypeptide is Guanine nucleotide-binding protein G(I)/G(S)/G(T) subunit beta-3 (GNB3) (Canis lupus familiaris (Dog)).